The chain runs to 98 residues: Protein Frey 1 (98 aa).

The chain crosses the membrane as a helical span at residues 13 to 29 (AGLSLFLHLILAVALLR). Positions 60–87 (YGILPKHPRPRGPRPLLSRAQQRKRDGP) are disordered.

As to quaternary structure, interacts with SPPL2C (via active sites); the interaction stabilizes FREY1 protein and inhibits SPPL2C proteolytic activity. Interacts with IZUMO1; the interaction retains IZUMO1 at the endoplasmic reticulum membrane and coordinates IZUMO1 complex assembly.

The protein resides in the endoplasmic reticulum membrane. In terms of biological role, key regulator for male fertility expressed transiently in round spermatids where it recruits IZUMO1 at the endoplasmic reticulum (ER) membrane and coordinates the oolemmal binding multimeric complex (IZUMO1 complex) assembly. Upon complete assembly of the IZUMO1 complex, its ER retention is released, facilitating IZUMO1 complex export to the acrosome. Through the interaction with SPPL2C, inhibits its intramembrane protease activity directly accessing the catalytic center of an I-CLiP. The chain is Protein Frey 1 from Homo sapiens (Human).